A 256-amino-acid polypeptide reads, in one-letter code: tRNA pseudouridine synthase A (256 aa).

The Nucleophile role is filled by Asp-49. Tyr-104 lines the substrate pocket.

It belongs to the tRNA pseudouridine synthase TruA family.

It carries out the reaction uridine(38/39/40) in tRNA = pseudouridine(38/39/40) in tRNA. In terms of biological role, formation of pseudouridine at positions 38, 39 and 40 in the anticodon stem and loop of transfer RNAs. This Methanopyrus kandleri (strain AV19 / DSM 6324 / JCM 9639 / NBRC 100938) protein is tRNA pseudouridine synthase A.